Reading from the N-terminus, the 491-residue chain is Probable glycine dehydrogenase (decarboxylating) subunit 2 (491 aa).

At K264 the chain carries N6-(pyridoxal phosphate)lysine.

This sequence belongs to the GcvP family. C-terminal subunit subfamily. As to quaternary structure, the glycine cleavage system is composed of four proteins: P, T, L and H. In this organism, the P 'protein' is a heterodimer of two subunits. Requires pyridoxal 5'-phosphate as cofactor.

The catalysed reaction is N(6)-[(R)-lipoyl]-L-lysyl-[glycine-cleavage complex H protein] + glycine + H(+) = N(6)-[(R)-S(8)-aminomethyldihydrolipoyl]-L-lysyl-[glycine-cleavage complex H protein] + CO2. The glycine cleavage system catalyzes the degradation of glycine. The P protein binds the alpha-amino group of glycine through its pyridoxal phosphate cofactor; CO(2) is released and the remaining methylamine moiety is then transferred to the lipoamide cofactor of the H protein. This chain is Probable glycine dehydrogenase (decarboxylating) subunit 2, found in Coxiella burnetii (strain CbuG_Q212) (Coxiella burnetii (strain Q212)).